The following is a 147-amino-acid chain: Large ribosomal subunit protein bL9 (147 aa).

Belongs to the bacterial ribosomal protein bL9 family.

Binds to the 23S rRNA. The chain is Large ribosomal subunit protein bL9 from Mesoplasma florum (strain ATCC 33453 / NBRC 100688 / NCTC 11704 / L1) (Acholeplasma florum).